The sequence spans 714 residues: Fatty acid oxidation complex subunit alpha (714 aa).

The tract at residues 1-190 (MEMTSAFTLN…KLGLVDDVVP (190 aa)) is enoyl-CoA hydratase. A 3-hydroxyacyl-CoA dehydrogenase region spans residues 306-714 (APLNSVGILG…FWKTTATDLQ (409 aa)).

The protein in the N-terminal section; belongs to the enoyl-CoA hydratase/isomerase family. In the central section; belongs to the 3-hydroxyacyl-CoA dehydrogenase family. As to quaternary structure, heterotetramer of two alpha chains (FadJ) and two beta chains (FadI).

Its subcellular location is the cytoplasm. It carries out the reaction a (3S)-3-hydroxyacyl-CoA = a (2E)-enoyl-CoA + H2O. The catalysed reaction is a 4-saturated-(3S)-3-hydroxyacyl-CoA = a (3E)-enoyl-CoA + H2O. It catalyses the reaction a (3S)-3-hydroxyacyl-CoA + NAD(+) = a 3-oxoacyl-CoA + NADH + H(+). The enzyme catalyses (3S)-3-hydroxybutanoyl-CoA = (3R)-3-hydroxybutanoyl-CoA. It participates in lipid metabolism; fatty acid beta-oxidation. In terms of biological role, catalyzes the formation of a hydroxyacyl-CoA by addition of water on enoyl-CoA. Also exhibits 3-hydroxyacyl-CoA epimerase and 3-hydroxyacyl-CoA dehydrogenase activities. Strongly involved in the anaerobic degradation of long and medium-chain fatty acids in the presence of nitrate and weakly involved in the aerobic degradation of long-chain fatty acids. The sequence is that of Fatty acid oxidation complex subunit alpha (fadJ) from Escherichia coli (strain K12).